The primary structure comprises 35 residues: Augerpeptide hheTx5 (35 aa).

Contains 4 disulfide bonds. Expressed by the venom duct.

It is found in the secreted. The protein is Augerpeptide hheTx5 of Hastula hectica (Sea snail).